The primary structure comprises 353 residues: Photosystem II D2 protein (353 aa).

Thr-2 carries the N-acetylthreonine modification. Thr-2 is subject to Phosphothreonine. A helical membrane pass occupies residues 41–61; that stretch reads CAYFALGGWFTGTTFVTSWYT. Chlorophyll a is bound at residue His-118. A helical transmembrane segment spans residues 125–141; sequence GFMLRQFELARSVQLRP. Residues Gln-130 and Asn-143 each coordinate pheophytin a. The chain crosses the membrane as a helical span at residues 153-166; the sequence is VFVSVFLIYPLGQS. His-198 contributes to the chlorophyll a binding site. A helical transmembrane segment spans residues 208 to 228; the sequence is AALLCAIHGATVENTLFEDGD. A plastoquinone contacts are provided by His-215 and Phe-262. Fe cation is bound at residue His-215. His-269 lines the Fe cation pocket. The chain crosses the membrane as a helical span at residues 279 to 295; that stretch reads GLWMSALGVVGLALNLR.

The protein belongs to the reaction center PufL/M/PsbA/D family. As to quaternary structure, PSII is composed of 1 copy each of membrane proteins PsbA, PsbB, PsbC, PsbD, PsbE, PsbF, PsbH, PsbI, PsbJ, PsbK, PsbL, PsbM, PsbT, PsbX, PsbY, PsbZ, Psb30/Ycf12, at least 3 peripheral proteins of the oxygen-evolving complex and a large number of cofactors. It forms dimeric complexes. Requires The D1/D2 heterodimer binds P680, chlorophylls that are the primary electron donor of PSII, and subsequent electron acceptors. It shares a non-heme iron and each subunit binds pheophytin, quinone, additional chlorophylls, carotenoids and lipids. There is also a Cl(-1) ion associated with D1 and D2, which is required for oxygen evolution. The PSII complex binds additional chlorophylls, carotenoids and specific lipids. as cofactor.

The protein resides in the plastid. Its subcellular location is the chloroplast thylakoid membrane. It carries out the reaction 2 a plastoquinone + 4 hnu + 2 H2O = 2 a plastoquinol + O2. In terms of biological role, photosystem II (PSII) is a light-driven water:plastoquinone oxidoreductase that uses light energy to abstract electrons from H(2)O, generating O(2) and a proton gradient subsequently used for ATP formation. It consists of a core antenna complex that captures photons, and an electron transfer chain that converts photonic excitation into a charge separation. The D1/D2 (PsbA/PsbD) reaction center heterodimer binds P680, the primary electron donor of PSII as well as several subsequent electron acceptors. D2 is needed for assembly of a stable PSII complex. This chain is Photosystem II D2 protein, found in Morus indica (Mulberry).